The chain runs to 406 residues: Purine nucleoside permease (406 aa).

A signal peptide spans 1–22 (MKLSTLFTLATTISTLTTFTIA).

The protein belongs to the NUP family.

With respect to regulation, mammalian nucleoside transport inhibitors dipyridamole and NBMPR inhibit adenosine transport by NUP. In terms of biological role, nucleoside permease that transports adenosine and guanosine. Does not show any transport activities towards cytidine, adenine, guanine, uridine, and uracil. This is Purine nucleoside permease from Candida albicans (Yeast).